The following is a 76-amino-acid chain: Antimicrobial peptide Smp24 (76 aa).

Residues 1–22 (MQYKTFLVIFMAYLLVTHEAEA) form the signal peptide. Residues 47 to 76 (SKRKRDVEDFFDPYQRDLDLELERLLSQLQ) constitute a propeptide that is removed on maturation.

The protein belongs to the non-disulfide-bridged peptide (NDBP) superfamily. Medium-length antimicrobial peptide (group 3) family. In terms of tissue distribution, expressed by the venom gland.

The protein localises to the secreted. Its subcellular location is the target cell membrane. Its function is as follows. Peptide that shows antimicrobial activity, moderate cytolysis on eukaryote cells and interference with DNA synthesis. Has potent activity against Gram-positive bacteria and moderate activity against Gram-negative bacteria, as well as moderate activity against fungi. Acts by inducing bacterial membrane disruption. Uses multiple modes of action depending on the membrane lipid composition. Uses a toroidal pore mechanism against the prokaryotic like membrane and forms hexagonal phase non-lamellar structures in eukaryotic-like membrane. Shows activity against B.subtilis (MIC=4 ug/ml), S.epidermidis (MIC=8 ug/ml), S.aureus (MIC=8 ug/ml), E.coli (MIC=64 ug/ml), K.pneumoniae (MIC=128 ug/ml), P.aeruginosa (MIC=256 ug/ml), and C.albicans (MIC=32 ug/ml). Shows moderate hemolysis activity. The chain is Antimicrobial peptide Smp24 from Scorpio palmatus (Israeli golden scorpion).